The following is an 89-amino-acid chain: Small ribosomal subunit protein uS15 (89 aa).

This sequence belongs to the universal ribosomal protein uS15 family. Part of the 30S ribosomal subunit. Forms a bridge to the 50S subunit in the 70S ribosome, contacting the 23S rRNA.

In terms of biological role, one of the primary rRNA binding proteins, it binds directly to 16S rRNA where it helps nucleate assembly of the platform of the 30S subunit by binding and bridging several RNA helices of the 16S rRNA. Forms an intersubunit bridge (bridge B4) with the 23S rRNA of the 50S subunit in the ribosome. This chain is Small ribosomal subunit protein uS15, found in Streptococcus uberis (strain ATCC BAA-854 / 0140J).